The chain runs to 527 residues: Berberine bridge enzyme-like 14 (527 aa).

The N-terminal stretch at 1–23 (MKSSTTQTLIFTVFLLLIPTSFA) is a signal peptide. An intrachain disulfide couples Cys-35 to Cys-96. Asn-47, Asn-72, Asn-161, Asn-296, Asn-328, Asn-396, and Asn-481 each carry an N-linked (GlcNAc...) asparagine glycan. Residues 74-249 (TTRKPVAIVA…LAWKIKLVPV (176 aa)) form the FAD-binding PCMH-type domain. The 6-(S-cysteinyl)-8alpha-(pros-histidyl)-FAD (His-Cys) cross-link spans 111–174 (HDYDGMSYLS…NLRGFPAGIC (64 aa)).

It belongs to the oxygen-dependent FAD-linked oxidoreductase family. FAD serves as cofactor. Post-translationally, the FAD cofactor is bound via a bicovalent 6-S-cysteinyl, 8alpha-N1-histidyl FAD linkage.

It is found in the secreted. It localises to the cell wall. The polypeptide is Berberine bridge enzyme-like 14 (Arabidopsis thaliana (Mouse-ear cress)).